Reading from the N-terminus, the 426-residue chain is Serine--tRNA ligase (426 aa).

L-serine is bound at residue 227 to 229 (TSE). ATP is bound by residues 258–260 (RKE) and valine 274. Glutamate 281 is an L-serine binding site. 345–348 (ELTS) lines the ATP pocket. Residue threonine 380 coordinates L-serine.

The protein belongs to the class-II aminoacyl-tRNA synthetase family. Type-1 seryl-tRNA synthetase subfamily. Homodimer. The tRNA molecule binds across the dimer.

The protein resides in the cytoplasm. It catalyses the reaction tRNA(Ser) + L-serine + ATP = L-seryl-tRNA(Ser) + AMP + diphosphate + H(+). The enzyme catalyses tRNA(Sec) + L-serine + ATP = L-seryl-tRNA(Sec) + AMP + diphosphate + H(+). Its pathway is aminoacyl-tRNA biosynthesis; selenocysteinyl-tRNA(Sec) biosynthesis; L-seryl-tRNA(Sec) from L-serine and tRNA(Sec): step 1/1. Its function is as follows. Catalyzes the attachment of serine to tRNA(Ser). Is also able to aminoacylate tRNA(Sec) with serine, to form the misacylated tRNA L-seryl-tRNA(Sec), which will be further converted into selenocysteinyl-tRNA(Sec). The sequence is that of Serine--tRNA ligase from Clavibacter michiganensis subsp. michiganensis (strain NCPPB 382).